Reading from the N-terminus, the 370-residue chain is Aminomethyltransferase (370 aa).

Belongs to the GcvT family. The glycine cleavage system is composed of four proteins: P, T, L and H.

The catalysed reaction is N(6)-[(R)-S(8)-aminomethyldihydrolipoyl]-L-lysyl-[protein] + (6S)-5,6,7,8-tetrahydrofolate = N(6)-[(R)-dihydrolipoyl]-L-lysyl-[protein] + (6R)-5,10-methylene-5,6,7,8-tetrahydrofolate + NH4(+). Its function is as follows. The glycine cleavage system catalyzes the degradation of glycine. The sequence is that of Aminomethyltransferase from Prochlorococcus marinus (strain AS9601).